The sequence spans 1399 residues: Meiosis-specific protein ASY2 (1399 aa).

The 239-residue stretch at 10 to 248 (QQSLILTTEL…SQHHVLTVKV (239 aa)) folds into the HORMA domain. The segment covering 257–266 (PCEDENDNMQ) has biased composition (acidic residues). Disordered regions lie at residues 257–281 (PCEDENDNMQDDERSKGPDSLHDDQ), 487–525 (SKPKVTMEELEEKLTPPSSEPKSAPPSSEPKSAPPSSEP), 617–656 (RLTGNPSNEAQSSRSNRIEIPTLLDEPDREGSGGHLAAPE), 940–974 (PPPPAPIEEERQPLDGEAAASNPPVSAGPSGVDQV), and 1045–1090 (DQDK…AAPK). Positions 267-281 (DDERSKGPDSLHDDQ) are enriched in basic and acidic residues. Residues 509–523 (SAPPSSEPKSAPPSS) are compositionally biased toward pro residues. Polar residues predominate over residues 617–631 (RLTGNPSNEAQSSRS). The stretch at 1205–1246 (MASLRDAAEIHKAEMSSLNDEVKRLNSREADLQKEFSDLQVA) forms a coiled coil.

The protein localises to the chromosome. The protein resides in the nucleus. In terms of biological role, required for normal meiosis. In Arabidopsis thaliana (Mouse-ear cress), this protein is Meiosis-specific protein ASY2.